Reading from the N-terminus, the 115-residue chain is Nucleoid-associated protein LA_4332 (115 aa).

The protein belongs to the YbaB/EbfC family. Homodimer.

It is found in the cytoplasm. It localises to the nucleoid. Its function is as follows. Binds to DNA and alters its conformation. May be involved in regulation of gene expression, nucleoid organization and DNA protection. The protein is Nucleoid-associated protein LA_4332 of Leptospira interrogans serogroup Icterohaemorrhagiae serovar Lai (strain 56601).